Reading from the N-terminus, the 522-residue chain is Transmembrane protein 213R (522 aa).

2 helical membrane-spanning segments follow: residues 33–50 and 55–72; these read NTIT…LLFG and SLYI…IYSQ.

This sequence belongs to the IIV-6 213R family.

It localises to the membrane. The protein is Transmembrane protein 213R of Invertebrate iridescent virus 6 (IIV-6).